We begin with the raw amino-acid sequence, 209 residues long: MEVKVLDFNGKDTGRKVQLSDSVFAIEPNNHAVYLDVKQYLANQRQGTHKAKERAEVTGSTRKIKKQKGTGTARAGSVKNPLFKGGGTVFGPRPRSYSFKLNKNLKRLARKSAFSIKAKESNIIVLEDFNFEAPNTKNFINVLKALGLENKKSLFVLGESNKNVYLSSRNLKASNVVTSSELSTYAILNTNNLVLLEGSLELIEENLSK.

Residues 45 to 77 (RQGTHKAKERAEVTGSTRKIKKQKGTGTARAGS) form a disordered region.

It belongs to the universal ribosomal protein uL4 family. Part of the 50S ribosomal subunit.

In terms of biological role, one of the primary rRNA binding proteins, this protein initially binds near the 5'-end of the 23S rRNA. It is important during the early stages of 50S assembly. It makes multiple contacts with different domains of the 23S rRNA in the assembled 50S subunit and ribosome. Functionally, forms part of the polypeptide exit tunnel. The sequence is that of Large ribosomal subunit protein uL4 from Flavobacterium johnsoniae (strain ATCC 17061 / DSM 2064 / JCM 8514 / BCRC 14874 / CCUG 350202 / NBRC 14942 / NCIMB 11054 / UW101) (Cytophaga johnsonae).